The primary structure comprises 108 residues: UPF0060 membrane protein RER_49640 (108 aa).

Helical transmembrane passes span 8–28 (LLFV…WQGI), 33–53 (GWIW…VATM), 62–82 (ILAA…VVMD), and 87–107 (DRFD…IMYA).

The protein belongs to the UPF0060 family.

It is found in the cell membrane. The polypeptide is UPF0060 membrane protein RER_49640 (Rhodococcus erythropolis (strain PR4 / NBRC 100887)).